The sequence spans 480 residues: Adenylosuccinate synthetase, chloroplastic (480 aa).

Residues 1-54 (MATARVMVADRARAFGGTTATRARRDDQGRRVTIARGIPSRARVVVARASERAY) constitute a chloroplast transit peptide. Residues 69-75 (GDEGKGK) and 97-99 (GHT) contribute to the GTP site. The active-site Proton acceptor is Asp-70. The Mg(2+) site is built by Asp-70 and Gly-97. IMP is bound by residues 70–73 (DEGK), 95–98 (NAGH), Thr-187, Arg-201, Asn-278, Thr-293, and Arg-357. His-98 functions as the Proton donor in the catalytic mechanism. Position 353 to 359 (353 to 359 (TTTGRPR)) interacts with substrate. GTP contacts are provided by residues Arg-359, 385-387 (KLD), and 468-470 (GVG).

Belongs to the adenylosuccinate synthetase family. As to quaternary structure, homodimer. The cofactor is Mg(2+).

Its subcellular location is the plastid. The protein resides in the chloroplast. The catalysed reaction is IMP + L-aspartate + GTP = N(6)-(1,2-dicarboxyethyl)-AMP + GDP + phosphate + 2 H(+). Its pathway is purine metabolism; AMP biosynthesis via de novo pathway; AMP from IMP: step 1/2. Plays an important role in the de novo pathway and in the salvage pathway of purine nucleotide biosynthesis. Catalyzes the first committed step in the biosynthesis of AMP from IMP. In Ostreococcus tauri, this protein is Adenylosuccinate synthetase, chloroplastic.